A 250-amino-acid polypeptide reads, in one-letter code: uncharacterized protein (250 aa).

To Synechocystis PCC 6803 sll0249.

This is an uncharacterized protein from Nostoc sp. (strain PCC 7120 / SAG 25.82 / UTEX 2576).